A 220-amino-acid chain; its full sequence is UPF0319 protein YccT (220 aa).

The N-terminal stretch at 1–20 (MKTGALTTFLALCLPVTVFA) is a signal peptide.

Belongs to the UPF0319 family.

This is UPF0319 protein YccT from Salmonella schwarzengrund (strain CVM19633).